The following is a 56-amino-acid chain: Small ribosomal subunit protein uS14A (56 aa).

Positions 21 and 24 each coordinate Zn(2+). A Phosphoserine modification is found at Ser25. 2 residues coordinate Zn(2+): Cys39 and Cys42.

This sequence belongs to the universal ribosomal protein uS14 family. In terms of assembly, component of the small ribosomal subunit (SSU). Mature yeast ribosomes consist of a small (40S) and a large (60S) subunit. The 40S small subunit contains 1 molecule of ribosomal RNA (18S rRNA) and 33 different proteins (encoded by 57 genes). The large 60S subunit contains 3 rRNA molecules (25S, 5.8S and 5S rRNA) and 46 different proteins (encoded by 81 genes). The cofactor is Zn(2+).

The protein localises to the cytoplasm. Its function is as follows. Component of the ribosome, a large ribonucleoprotein complex responsible for the synthesis of proteins in the cell. The small ribosomal subunit (SSU) binds messenger RNAs (mRNAs) and translates the encoded message by selecting cognate aminoacyl-transfer RNA (tRNA) molecules. The large subunit (LSU) contains the ribosomal catalytic site termed the peptidyl transferase center (PTC), which catalyzes the formation of peptide bonds, thereby polymerizing the amino acids delivered by tRNAs into a polypeptide chain. The nascent polypeptides leave the ribosome through a tunnel in the LSU and interact with protein factors that function in enzymatic processing, targeting, and the membrane insertion of nascent chains at the exit of the ribosomal tunnel. This is Small ribosomal subunit protein uS14A from Saccharomyces cerevisiae (strain ATCC 204508 / S288c) (Baker's yeast).